The following is a 351-amino-acid chain: Epoxyqueuosine reductase (351 aa).

Asp131 serves as the catalytic Proton donor. The 4Fe-4S ferredoxin-type domain maps to 177 to 205 (EDQPVDYGCGSCTRCVDFCPTKALLGDGR). Cys185, Cys188, Cys191, Cys195, Cys211, Cys237, Cys240, and Cys244 together coordinate [4Fe-4S] cluster.

It belongs to the QueG family. In terms of assembly, monomer. Cob(II)alamin is required as a cofactor. [4Fe-4S] cluster serves as cofactor.

Its subcellular location is the cytoplasm. It carries out the reaction epoxyqueuosine(34) in tRNA + AH2 = queuosine(34) in tRNA + A + H2O. It participates in tRNA modification; tRNA-queuosine biosynthesis. Catalyzes the conversion of epoxyqueuosine (oQ) to queuosine (Q), which is a hypermodified base found in the wobble positions of tRNA(Asp), tRNA(Asn), tRNA(His) and tRNA(Tyr). The polypeptide is Epoxyqueuosine reductase (Lactococcus garvieae (strain Lg2) (Enterococcus seriolicida)).